We begin with the raw amino-acid sequence, 635 residues long: Early transcription factor 70 kDa subunit (635 aa).

The 154-residue stretch at 32 to 185 folds into the Helicase ATP-binding domain; the sequence is RSIIDENKSV…SNIISLMSDE (154 aa). 45-52 contacts ATP; the sequence is HIMGSGKT. A DEXH box motif is present at residues 135 to 138; that stretch reads DEAH. The Helicase C-terminal domain occupies 326–505; it reads KFKYFITKIE…TLPFDIKKLL (180 aa).

This sequence belongs to the helicase family. VETF subfamily. As to quaternary structure, heterodimer of a 70 kDa and a 82 kDa subunit. Part of the early transcription complex composed of ETF, RAP94, and the DNA-directed RNA polymerase.

Its subcellular location is the virion. Acts with RNA polymerase to initiate transcription from early gene promoters. Is recruited by the RPO-associated protein of 94 kDa (RAP94) to form the early transcription complex, which also contains the core RNA polymerase. ETF heterodimer binds to early gene promoters. The protein is Early transcription factor 70 kDa subunit (VETFS) of Oryctolagus cuniculus (Rabbit).